A 275-amino-acid chain; its full sequence is MTLQQQIIKALGAKPQINAEEEIRRSIDFLKSYLQTYPFIKSLVLGISGGQDSTLAGKLCQMAINELRQKTGNESLQFIAVRLPYGVQADEQDCQDAIAFIQPDRVLTVNIKGAVLASEQALREAGIELSDFVRGNEKARERMKAQYSIAGMTSGVVVGTDHAAEAITGFFTKYGDGGTDINPLYRLNKRQGKQLLAALGCPEHLYKKAPTADLEDDRPSLPDEVALGVTYDNIDDYLEGKNVPEQVARTIENWYLKTEHKRRPPITVFDDFWKK.

46–53 (GISGGQDS) is a binding site for ATP. Asp52 contacts Mg(2+). A deamido-NAD(+)-binding site is contributed by Arg140. Position 160 (Thr160) interacts with ATP. Glu165 provides a ligand contact to Mg(2+). 2 residues coordinate deamido-NAD(+): Lys173 and Asp180. ATP is bound by residues Lys189 and Thr211. 260 to 261 (HK) contributes to the deamido-NAD(+) binding site.

Belongs to the NAD synthetase family. As to quaternary structure, homodimer.

It catalyses the reaction deamido-NAD(+) + NH4(+) + ATP = AMP + diphosphate + NAD(+) + H(+). Its pathway is cofactor biosynthesis; NAD(+) biosynthesis; NAD(+) from deamido-NAD(+) (ammonia route): step 1/1. Its function is as follows. Catalyzes the ATP-dependent amidation of deamido-NAD to form NAD. Uses ammonia as a nitrogen source. This is NH(3)-dependent NAD(+) synthetase from Escherichia coli O127:H6 (strain E2348/69 / EPEC).